The sequence spans 180 residues: Large ribosomal subunit protein uL5 (180 aa).

It belongs to the universal ribosomal protein uL5 family. In terms of assembly, part of the 50S ribosomal subunit; part of the 5S rRNA/L5/L18/L25 subcomplex. Contacts the 5S rRNA and the P site tRNA. Forms a bridge to the 30S subunit in the 70S ribosome.

In terms of biological role, this is one of the proteins that bind and probably mediate the attachment of the 5S RNA into the large ribosomal subunit, where it forms part of the central protuberance. In the 70S ribosome it contacts protein S13 of the 30S subunit (bridge B1b), connecting the 2 subunits; this bridge is implicated in subunit movement. Contacts the P site tRNA; the 5S rRNA and some of its associated proteins might help stabilize positioning of ribosome-bound tRNAs. The protein is Large ribosomal subunit protein uL5 of Xanthomonas campestris pv. campestris (strain 8004).